Reading from the N-terminus, the 160-residue chain is Endoribonuclease YbeY (160 aa).

His-112, His-116, and His-122 together coordinate Zn(2+).

This sequence belongs to the endoribonuclease YbeY family. It depends on Zn(2+) as a cofactor.

The protein resides in the cytoplasm. Its function is as follows. Single strand-specific metallo-endoribonuclease involved in late-stage 70S ribosome quality control and in maturation of the 3' terminus of the 16S rRNA. In Maricaulis maris (strain MCS10) (Caulobacter maris), this protein is Endoribonuclease YbeY.